We begin with the raw amino-acid sequence, 489 residues long: Rhamnulokinase (489 aa).

Residue 13–17 (ASSGR) coordinates ATP. Cys68 and Cys222 are oxidised to a cystine. Residues Gly83 and 236–238 (HDT) each bind substrate. Asp237 (proton acceptor) is an active-site residue. Residue Thr259 participates in ATP binding. Asn296 lines the substrate pocket. Residue Gln304 participates in ATP binding. Residues Cys353 and Cys370 are joined by a disulfide bond. Gly402 is a binding site for ATP. A disulfide bridge connects residues Cys413 and Cys417.

This sequence belongs to the rhamnulokinase family. In terms of assembly, monomer. Requires Mg(2+) as cofactor.

The catalysed reaction is L-rhamnulose + ATP = L-rhamnulose 1-phosphate + ADP + H(+). Its pathway is carbohydrate degradation; L-rhamnose degradation; glycerone phosphate from L-rhamnose: step 2/3. Functionally, involved in the catabolism of L-rhamnose (6-deoxy-L-mannose). Catalyzes the transfer of the gamma-phosphate group from ATP to the 1-hydroxyl group of L-rhamnulose to yield L-rhamnulose 1-phosphate. The polypeptide is Rhamnulokinase (Escherichia coli (strain SE11)).